We begin with the raw amino-acid sequence, 318 residues long: Transaldolase (318 aa).

The active-site Schiff-base intermediate with substrate is the K132.

Belongs to the transaldolase family. Type 1 subfamily. In terms of assembly, homodimer.

Its subcellular location is the cytoplasm. The catalysed reaction is D-sedoheptulose 7-phosphate + D-glyceraldehyde 3-phosphate = D-erythrose 4-phosphate + beta-D-fructose 6-phosphate. It participates in carbohydrate degradation; pentose phosphate pathway; D-glyceraldehyde 3-phosphate and beta-D-fructose 6-phosphate from D-ribose 5-phosphate and D-xylulose 5-phosphate (non-oxidative stage): step 2/3. Its function is as follows. Transaldolase is important for the balance of metabolites in the pentose-phosphate pathway. The sequence is that of Transaldolase from Shewanella baltica (strain OS223).